The chain runs to 309 residues: MLSAAEGILLSIATVEAGLGVLGNTFIALVNCMDWAKNKKLSKIGFLLFGLATSRIFIVWILILDAYAKLFFPGKYLSKSLTEIISCIWMTVNHMTVWFATSLSIFYFLKIANFSHYIFLWLKRRTDKVFAFLLWCLLISWAISFSFTVKVMKSNPKNHGNRTSGTHWEKREFTSNYVLINIGVISLLIMTLTACFLLIISLWKHSRQMQSNVSGFRDLNTEAHVKAIKFLISFIILFILYFIGVAVEIICMFIPENKLLFIFGLTTASVYPCCHSVILILTNSQLKQAFVKVLEGLKFSENGKDLRAT.

The Extracellular portion of the chain corresponds to 1 to 9 (MLSAAEGIL). A helical membrane pass occupies residues 10-32 (LSIATVEAGLGVLGNTFIALVNC). The Cytoplasmic portion of the chain corresponds to 33-44 (MDWAKNKKLSKI). Residues 45–67 (GFLLFGLATSRIFIVWILILDAY) traverse the membrane as a helical segment. Residues 68-86 (AKLFFPGKYLSKSLTEIIS) lie on the Extracellular side of the membrane. A helical transmembrane segment spans residues 87-109 (CIWMTVNHMTVWFATSLSIFYFL). At 110 to 129 (KIANFSHYIFLWLKRRTDKV) the chain is on the cytoplasmic side. Residues 130–149 (FAFLLWCLLISWAISFSFTV) form a helical membrane-spanning segment. Residues 150-177 (KVMKSNPKNHGNRTSGTHWEKREFTSNY) are Extracellular-facing. The N-linked (GlcNAc...) asparagine glycan is linked to asparagine 161. A helical transmembrane segment spans residues 178–200 (VLINIGVISLLIMTLTACFLLII). The Cytoplasmic segment spans residues 201–226 (SLWKHSRQMQSNVSGFRDLNTEAHVK). The chain crosses the membrane as a helical span at residues 227-249 (AIKFLISFIILFILYFIGVAVEI). Over 250–258 (ICMFIPENK) the chain is Extracellular. Residues 259–281 (LLFIFGLTTASVYPCCHSVILIL) traverse the membrane as a helical segment. At 282–309 (TNSQLKQAFVKVLEGLKFSENGKDLRAT) the chain is on the cytoplasmic side.

This sequence belongs to the G-protein coupled receptor T2R family. As to expression, expressed in subsets of taste receptor cells of the tongue and palate epithelium and exclusively in gustducin-positive cells. Expressed in 15% taste bud cells in circumvallate and foliate papillae but only in 2% in fungiform papillae. Expressed in the duodenum, antrum and fundus (part of the stomach).

It is found in the membrane. In terms of biological role, gustducin-coupled cycloheximide receptor implicated in the perception of bitter compounds in the oral cavity and the gastrointestinal tract. Signals through PLCB2 and the calcium-regulated cation channel TRPM5. The protein is Taste receptor type 2 member 105 (Tas2r105) of Rattus norvegicus (Rat).